The following is a 464-amino-acid chain: Cysteine--tRNA ligase (464 aa).

Cys28 provides a ligand contact to Zn(2+). The short motif at 30–40 is the 'HIGH' region element; sequence PTVYDHSHIGH. The Zn(2+) site is built by Cys205, His230, and Glu234. Positions 263–267 match the 'KMSKS' region motif; the sequence is KMSKS. An ATP-binding site is contributed by Lys266.

The protein belongs to the class-I aminoacyl-tRNA synthetase family. The cofactor is Zn(2+).

It is found in the cytoplasm. It catalyses the reaction tRNA(Cys) + L-cysteine + ATP = L-cysteinyl-tRNA(Cys) + AMP + diphosphate. This is Cysteine--tRNA ligase from Ignicoccus hospitalis (strain KIN4/I / DSM 18386 / JCM 14125).